Reading from the N-terminus, the 291-residue chain is Protease HtpX homolog (291 aa).

A run of 2 helical transmembrane segments spans residues Val-4 to Ile-24 and Met-38 to Leu-58. His-144 contributes to the Zn(2+) binding site. The active site involves Glu-145. His-148 contributes to the Zn(2+) binding site. The next 2 helical transmembrane spans lie at Gly-152 to Ser-172 and Ile-199 to Phe-219. Zn(2+) is bound at residue Glu-224.

This sequence belongs to the peptidase M48B family. Requires Zn(2+) as cofactor.

It is found in the cell inner membrane. In Chlorobium limicola (strain DSM 245 / NBRC 103803 / 6330), this protein is Protease HtpX homolog.